The primary structure comprises 212 residues: Spore germination lipase LipC (212 aa).

Ser-11 acts as the Nucleophile in catalysis. Gly-50 and Asn-82 together coordinate substrate. Residues Asp-186 and His-189 contribute to the active site.

The protein belongs to the 'GDSL' lipolytic enzyme family.

The protein resides in the spore coat. In terms of biological role, lipase involved in spore germination. The sequence is that of Spore germination lipase LipC (lipC) from Bacillus licheniformis (strain ATCC 14580 / DSM 13 / JCM 2505 / CCUG 7422 / NBRC 12200 / NCIMB 9375 / NCTC 10341 / NRRL NRS-1264 / Gibson 46).